The chain runs to 710 residues: Chaperonin-containing T-complex member BBS12 (710 aa).

It belongs to the TCP-1 chaperonin family. BBS12 subfamily. In terms of assembly, component of the chaperonin-containing T-complex (TRiC), a heterooligomeric complex of about 850 to 900 kDa that forms two stacked rings, 12 to 16 nm in diameter. Interacts with MKKS.

It is found in the cell projection. It localises to the cilium. In terms of biological role, component of the chaperonin-containing T-complex (TRiC), a molecular chaperone complex that assists the folding of proteins upon ATP hydrolysis. As part of the TRiC complex may play a role in the assembly of BBSome, a complex involved in ciliogenesis regulating transports vesicles to the cilia. Involved in adipogenic differentiation. The protein is Chaperonin-containing T-complex member BBS12 (BBS12) of Pongo abelii (Sumatran orangutan).